A 136-amino-acid chain; its full sequence is 5-hydroxyisourate hydrolase (136 aa).

The signal sequence occupies residues 1–20 (MKRYILATAIASLVAAPAMA). Substrate contacts are provided by histidine 31, arginine 69, and tyrosine 133.

It belongs to the transthyretin family. 5-hydroxyisourate hydrolase subfamily. Homotetramer.

The protein resides in the periplasm. The catalysed reaction is 5-hydroxyisourate + H2O = 5-hydroxy-2-oxo-4-ureido-2,5-dihydro-1H-imidazole-5-carboxylate + H(+). Catalyzes the hydrolysis of 5-hydroxyisourate (HIU) to 2-oxo-4-hydroxy-4-carboxy-5-ureidoimidazoline (OHCU). This is 5-hydroxyisourate hydrolase (hiuH) from Salmonella typhi.